A 409-amino-acid chain; its full sequence is MMKVLLSGGGTGGHVYPAIAIANKIRDEHPDAEIIFVGTEKGIESEIVPKYGFELKTVTVQGFKRKIDFDNVKRVFKLFKGLEQSRKIVKKFKPDIVIGTGGYVSGPVLFNASMGKIPAIIHEQNSFPGVTNKILSKTVTKVLTSFEDSHKRFPEAAEDKLVFTGNPVRKEILLSRKNIARKNLSISDEKRMVLCYGGSGGSRKINDAMRLVIKNMVNEDIAFIFATGKSYYDEFMGSISDINLKPYQKVVPYLEDMANALAASDLVIGSAGAISLAEITALGKPSIIIPKAYTAENHQEYNAKSIEKQGAGIAILEKNLTPESLNTAVFKLLGDRELLVDMANASKTIGKPEAIDLIYDEIMKVYNSTQKSTSKKTKKEKVIKEVKEIKKETTPSIEGQAKVIGIKKR.

Residues 11–13, N125, R169, S199, and Q299 contribute to the UDP-N-acetyl-alpha-D-glucosamine site; that span reads TGG.

This sequence belongs to the glycosyltransferase 28 family. MurG subfamily.

The protein resides in the cell membrane. It catalyses the reaction di-trans,octa-cis-undecaprenyl diphospho-N-acetyl-alpha-D-muramoyl-L-alanyl-D-glutamyl-meso-2,6-diaminopimeloyl-D-alanyl-D-alanine + UDP-N-acetyl-alpha-D-glucosamine = di-trans,octa-cis-undecaprenyl diphospho-[N-acetyl-alpha-D-glucosaminyl-(1-&gt;4)]-N-acetyl-alpha-D-muramoyl-L-alanyl-D-glutamyl-meso-2,6-diaminopimeloyl-D-alanyl-D-alanine + UDP + H(+). Its pathway is cell wall biogenesis; peptidoglycan biosynthesis. Its function is as follows. Cell wall formation. Catalyzes the transfer of a GlcNAc subunit on undecaprenyl-pyrophosphoryl-MurNAc-pentapeptide (lipid intermediate I) to form undecaprenyl-pyrophosphoryl-MurNAc-(pentapeptide)GlcNAc (lipid intermediate II). The sequence is that of UDP-N-acetylglucosamine--N-acetylmuramyl-(pentapeptide) pyrophosphoryl-undecaprenol N-acetylglucosamine transferase from Clostridioides difficile (strain 630) (Peptoclostridium difficile).